Here is a 525-residue protein sequence, read N- to C-terminus: Glutamate--cysteine ligase (525 aa).

This sequence belongs to the glutamate--cysteine ligase type 1 family. Type 1 subfamily.

The enzyme catalyses L-cysteine + L-glutamate + ATP = gamma-L-glutamyl-L-cysteine + ADP + phosphate + H(+). Its pathway is sulfur metabolism; glutathione biosynthesis; glutathione from L-cysteine and L-glutamate: step 1/2. The protein is Glutamate--cysteine ligase of Hahella chejuensis (strain KCTC 2396).